The chain runs to 86 residues: Weak neurotoxin 10 (86 aa).

A signal peptide spans 1–21; sequence MKTLLLTLVVVTIVCLDLGYT. 5 cysteine pairs are disulfide-bonded: cysteine 24–cysteine 45, cysteine 27–cysteine 32, cysteine 38–cysteine 63, cysteine 67–cysteine 78, and cysteine 79–cysteine 84.

This sequence belongs to the three-finger toxin family. Ancestral subfamily. Orphan group II sub-subfamily. As to expression, expressed by the venom gland.

The protein localises to the secreted. Its function is as follows. Binds with low affinity to muscular (alpha-1-beta-1-delta-epsilon/CHRNA1-CHRNB1-CHRND-CHRNE) and very low affinity to neuronal (alpha-7/CHRNA7) nicotinic acetylcholine receptor (nAChR). This is Weak neurotoxin 10 (WNTX10) from Naja sputatrix (Malayan spitting cobra).